Here is an 83-residue protein sequence, read N- to C-terminus: Keratin-associated protein 6-1 (83 aa).

The stretch at 9–15 (YGGLGCG) is one RPT 1-1 repeat. The RPT 1-2 repeat unit spans residues 19 to 25 (YGGLGCG). The stretch at 44–55 (GYGYGSRSLCGS) is one RPT 2-1 repeat. An RPT 2-2 repeat occupies 56–67 (GYGYGSRSLCGS).

Belongs to the KRTAP type 6 family. As to quaternary structure, interacts with wool keratins.

In terms of biological role, in the wool cortex, wool keratin intermediate filaments are embedded in an interfilamentous matrix, consisting of hair keratin-associated proteins (KRTAP), which are essential for the formation of a rigid and resistant wool shaft through their extensive disulfide bond cross-linking with abundant cysteine residues of wool keratins. The matrix proteins include the high-sulfur and high-glycine-tyrosine keratins. The protein is Keratin-associated protein 6-1 (KRTAP6-1) of Ovis aries (Sheep).